We begin with the raw amino-acid sequence, 271 residues long: 3-methyl-2-oxobutanoate hydroxymethyltransferase (271 aa).

Residues Asp-53 and Asp-92 each coordinate Mg(2+). Residues 53–54, Asp-92, and Lys-120 each bind 3-methyl-2-oxobutanoate; that span reads DS. Glu-122 is a Mg(2+) binding site. Residue Glu-189 is the Proton acceptor of the active site.

The protein belongs to the PanB family. As to quaternary structure, homodecamer; pentamer of dimers. Mg(2+) serves as cofactor.

It localises to the cytoplasm. It catalyses the reaction 3-methyl-2-oxobutanoate + (6R)-5,10-methylene-5,6,7,8-tetrahydrofolate + H2O = 2-dehydropantoate + (6S)-5,6,7,8-tetrahydrofolate. It participates in cofactor biosynthesis; (R)-pantothenate biosynthesis; (R)-pantoate from 3-methyl-2-oxobutanoate: step 1/2. In terms of biological role, catalyzes the reversible reaction in which hydroxymethyl group from 5,10-methylenetetrahydrofolate is transferred onto alpha-ketoisovalerate to form ketopantoate. This is 3-methyl-2-oxobutanoate hydroxymethyltransferase from Burkholderia multivorans (strain ATCC 17616 / 249).